The following is a 414-amino-acid chain: 3-oxoacyl-[acyl-carrier-protein] synthase 2 (414 aa).

The Ketosynthase family 3 (KS3) domain occupies 4–411; the sequence is NKRVVITGMG…GHNAVLVFKK (408 aa). Residues Cys165, His304, and His341 each act as for beta-ketoacyl synthase activity in the active site.

This sequence belongs to the thiolase-like superfamily. Beta-ketoacyl-ACP synthases family.

It catalyses the reaction a fatty acyl-[ACP] + malonyl-[ACP] + H(+) = a 3-oxoacyl-[ACP] + holo-[ACP] + CO2. The catalysed reaction is (9Z)-hexadecenoyl-[ACP] + malonyl-[ACP] + H(+) = 3-oxo-(11Z)-octadecenoyl-[ACP] + holo-[ACP] + CO2. It participates in lipid metabolism; fatty acid biosynthesis. Functionally, involved in the type II fatty acid elongation cycle. Catalyzes the elongation of a wide range of acyl-ACP by the addition of two carbons from malonyl-ACP to an acyl acceptor. Can efficiently catalyze the conversion of palmitoleoyl-ACP (cis-hexadec-9-enoyl-ACP) to cis-vaccenoyl-ACP (cis-octadec-11-enoyl-ACP), an essential step in the thermal regulation of fatty acid composition. The sequence is that of 3-oxoacyl-[acyl-carrier-protein] synthase 2 (fabF) from Staphylococcus aureus (strain MW2).